The chain runs to 173 residues: ATP-dependent protease subunit HslV (173 aa).

Thr-2 is a catalytic residue. Na(+) contacts are provided by Gly-158, Asp-161, and Thr-164.

It belongs to the peptidase T1B family. HslV subfamily. A double ring-shaped homohexamer of HslV is capped on each side by a ring-shaped HslU homohexamer. The assembly of the HslU/HslV complex is dependent on binding of ATP.

It localises to the cytoplasm. The enzyme catalyses ATP-dependent cleavage of peptide bonds with broad specificity.. Allosterically activated by HslU binding. Functionally, protease subunit of a proteasome-like degradation complex believed to be a general protein degrading machinery. This Actinobacillus succinogenes (strain ATCC 55618 / DSM 22257 / CCUG 43843 / 130Z) protein is ATP-dependent protease subunit HslV.